The primary structure comprises 712 residues: Polyribonucleotide nucleotidyltransferase (712 aa).

The Mg(2+) site is built by Asp487 and Asp493. Residues 554-613 enclose the KH domain; it reads PKIITMTINPDKIRDVIGPSGKQINKIIEETGVKIDIEQDGTVFISSINQEMNDKAKKII. The region spanning 623-691 is the S1 motif domain; that stretch reads GEIYEAKVKR…KQGRVNLSRK (69 aa).

The protein belongs to the polyribonucleotide nucleotidyltransferase family. It depends on Mg(2+) as a cofactor.

It localises to the cytoplasm. It carries out the reaction RNA(n+1) + phosphate = RNA(n) + a ribonucleoside 5'-diphosphate. Functionally, involved in mRNA degradation. Catalyzes the phosphorolysis of single-stranded polyribonucleotides processively in the 3'- to 5'-direction. This is Polyribonucleotide nucleotidyltransferase from Bacillus cereus (strain ATCC 14579 / DSM 31 / CCUG 7414 / JCM 2152 / NBRC 15305 / NCIMB 9373 / NCTC 2599 / NRRL B-3711).